A 461-amino-acid chain; its full sequence is Photosystem II CP43 reaction center protein (461 aa).

Positions 1 to 2 are excised as a propeptide; that stretch reads ME. Residue threonine 3 is modified to N-acetylthreonine. A Phosphothreonine modification is found at threonine 3. The next 5 membrane-spanning stretches (helical) occupy residues 57–81, 122–143, 166–188, 243–263, and 279–300; these read LFEVAHFVPEKPMYEQGLILLPHLA, LLGPETLEESFPFFGYVWKDRN, KALYFGGVYDTWAPGGGDVRKIT, KPFAWARRALVWSGEAYLSYS, and WFNNTAYPSEFYGPTGPEASQA. Position 355 (glutamate 355) interacts with [CaMn4O5] cluster. Residues 435-459 form a helical membrane-spanning segment; sequence RARAAAAGFEKGIDRDLEPVLFMTP.

The protein belongs to the PsbB/PsbC family. PsbC subfamily. As to quaternary structure, PSII is composed of 1 copy each of membrane proteins PsbA, PsbB, PsbC, PsbD, PsbE, PsbF, PsbH, PsbI, PsbJ, PsbK, PsbL, PsbM, PsbT, PsbX, PsbY, PsbZ, Psb30/Ycf12, at least 3 peripheral proteins of the oxygen-evolving complex and a large number of cofactors. It forms dimeric complexes. It depends on Binds multiple chlorophylls and provides some of the ligands for the Ca-4Mn-5O cluster of the oxygen-evolving complex. It may also provide a ligand for a Cl- that is required for oxygen evolution. PSII binds additional chlorophylls, carotenoids and specific lipids. as a cofactor.

Its subcellular location is the plastid. The protein resides in the chloroplast thylakoid membrane. Its function is as follows. One of the components of the core complex of photosystem II (PSII). It binds chlorophyll and helps catalyze the primary light-induced photochemical processes of PSII. PSII is a light-driven water:plastoquinone oxidoreductase, using light energy to abstract electrons from H(2)O, generating O(2) and a proton gradient subsequently used for ATP formation. This Nandina domestica (Heavenly bamboo) protein is Photosystem II CP43 reaction center protein.